Here is a 637-residue protein sequence, read N- to C-terminus: Mitochondrial Rho GTPase 1 (637 aa).

Residues 1 to 613 (MSDGETLADV…LRRVFYLSDS (613 aa)) are Cytoplasmic-facing. Positions 7–184 (LADVRIVLIG…FYYAQKAVIY (178 aa)) constitute a Miro 1 domain. GTP-binding positions include 28–35 (SLLEDEWV), 74–78 (ISEMR), and 135–138 (LPSG). EF-hand domains follow at residues 200-235 (RAKK…CFGI) and 320-355 (EGVQ…CSAP). Asp213, Asp215, Asp217, Tyr219, Glu224, Asp333, Asp335, Asp337, Cys339, and Glu344 together coordinate Ca(2+). The Miro 2 domain occupies 436-601 (RKVFQCLVVG…FEQLAMMAVY (166 aa)). Residues 445–452 (GAKDAGKT), 482–486 (KVKEE), and 549–552 (TKVE) each bind GTP. The helical; Anchor for type IV membrane protein transmembrane segment at 614-634 (NLLSKITFGAAIVALAGFLVL) threads the bilayer. Topologically, residues 635 to 637 (KNL) are mitochondrial intermembrane.

This sequence belongs to the mitochondrial Rho GTPase family.

It localises to the mitochondrion outer membrane. In terms of biological role, mitochondrial GTPase involved in mitochondrial trafficking. Probably involved in control of anterograde transport of mitochondria and their subcellular distribution. The protein is Mitochondrial Rho GTPase 1 of Caenorhabditis briggsae.